Here is a 161-residue protein sequence, read N- to C-terminus: RNA pyrophosphohydrolase (161 aa).

The 143-residue stretch at 12-154 (PYRPGVGMMI…KRKLYQAVVK (143 aa)) folds into the Nudix hydrolase domain. Positions 46–67 (GGIVPGETPSIAAMREMLEEIG) match the Nudix box motif.

It belongs to the Nudix hydrolase family. RppH subfamily. Requires a divalent metal cation as cofactor.

In terms of biological role, accelerates the degradation of transcripts by removing pyrophosphate from the 5'-end of triphosphorylated RNA, leading to a more labile monophosphorylated state that can stimulate subsequent ribonuclease cleavage. This Rickettsia peacockii (strain Rustic) protein is RNA pyrophosphohydrolase.